Reading from the N-terminus, the 336-residue chain is Vacuolar protein sorting-associated protein 26B (336 aa).

Residues S302, S304, and S319 each carry the phosphoserine modification.

The protein belongs to the VPS26 family. As to quaternary structure, component of the heterotrimeric retromer cargo-selective complex (CSC), also described as vacuolar protein sorting subcomplex (VPS), formed by VPS26 (VPS26A or VPS26B), VPS29 and VPS35. The CSC has a highly elongated structure with VPS26 and VPS29 binding independently at opposite distal ends of VPS35 as central platform. The CSC is believed to associate with variable sorting nexins to form functionally distinct retromer complex variants. The originally described SNX-BAR retromer is a pentamer containing the CSC and a heterodimeric membrane-deforming subcomplex formed between SNX1 or SNX2 and SNX5 or SNX6 (also called SNX-BAR subcomplex); the respective CSC and SNX-BAR subcomplexes associate with low affinity. The CSC associates with SNX3 to form a SNX3-retromer complex. The CSC associates with SNX27, the WASH complex and the SNX-BAR subcomplex to form the SNX27-retromer complex. Interacts with VPS29, VPS35, TBC1D5, GOLPH3, SNX27. Ubiquitously expressed in developing embryo and adult. Highly expressed in brain.

Its subcellular location is the cytoplasm. The protein resides in the membrane. It localises to the early endosome. The protein localises to the late endosome. In terms of biological role, acts as a component of the retromer cargo-selective complex (CSC). The CSC is believed to be the core functional component of retromer or respective retromer complex variants acting to prevent missorting of selected transmembrane cargo proteins into the lysosomal degradation pathway. The recruitment of the CSC to the endosomal membrane involves RAB7A and SNX3. The SNX-BAR retromer mediates retrograde transport of cargo proteins from endosomes to the trans-Golgi network (TGN) and is involved in endosome-to-plasma membrane transport for cargo protein recycling. The SNX3-retromer mediates the retrograde transport of WLS distinct from the SNX-BAR retromer pathway. The SNX27-retromer is believed to be involved in endosome-to-plasma membrane trafficking and recycling of a broad spectrum of cargo proteins. The CSC seems to act as recruitment hub for other proteins, such as the WASH complex and TBC1D5. May be involved in retrograde transport of SORT1 but not of IGF2R. Acts redundantly with VSP26A in SNX-27 mediated endocytic recycling of SLC2A1/GLUT1. In Mus musculus (Mouse), this protein is Vacuolar protein sorting-associated protein 26B (Vps26b).